The chain runs to 62 residues: Frontoxin III (62 aa).

Disulfide bonds link Cys3-Cys24, Cys17-Cys41, Cys43-Cys54, and Cys55-Cys60.

As to expression, expressed by the venom gland.

The protein localises to the secreted. Its function is as follows. Binds to muscle nicotinic acetylcholine receptor (nAChR) and inhibit acetylcholine from binding to the receptor, thereby impairing neuromuscular transmission. The sequence is that of Frontoxin III from Micrurus frontalis (Coral snake).